The primary structure comprises 313 residues: Jacalin-related lectin 8 (313 aa).

Positions 1–23 (MFIIYLFIFLSSAIIDSNGVAMA) are cleaved as a signal peptide. Jacalin-type lectin domains are found at residues 24–163 (QKIE…YVKT) and 165–309 (PTKS…YFSP).

It belongs to the jacalin lectin family.

The protein is Jacalin-related lectin 8 (JAL8) of Arabidopsis thaliana (Mouse-ear cress).